The following is a 369-amino-acid chain: Phosphoserine aminotransferase (369 aa).

L-glutamate is bound at residue arginine 42. 4 residues coordinate pyridoxal 5'-phosphate: tryptophan 101, threonine 152, aspartate 176, and glutamine 199. Residue lysine 200 is modified to N6-(pyridoxal phosphate)lysine. Residue 241–242 (NT) coordinates pyridoxal 5'-phosphate.

It belongs to the class-V pyridoxal-phosphate-dependent aminotransferase family. SerC subfamily. Homodimer. Pyridoxal 5'-phosphate serves as cofactor.

The protein localises to the cytoplasm. The catalysed reaction is O-phospho-L-serine + 2-oxoglutarate = 3-phosphooxypyruvate + L-glutamate. It catalyses the reaction 4-(phosphooxy)-L-threonine + 2-oxoglutarate = (R)-3-hydroxy-2-oxo-4-phosphooxybutanoate + L-glutamate. Its pathway is amino-acid biosynthesis; L-serine biosynthesis; L-serine from 3-phospho-D-glycerate: step 2/3. It participates in cofactor biosynthesis; pyridoxine 5'-phosphate biosynthesis; pyridoxine 5'-phosphate from D-erythrose 4-phosphate: step 3/5. Its function is as follows. Catalyzes the reversible conversion of 3-phosphohydroxypyruvate to phosphoserine and of 3-hydroxy-2-oxo-4-phosphonooxybutanoate to phosphohydroxythreonine. This is Phosphoserine aminotransferase from Delftia acidovorans (strain DSM 14801 / SPH-1).